The following is a 4691-amino-acid chain: Plectin (4691 aa).

Residues 1–1478 (MVAGMLMPLD…SELTTLTSQY (1478 aa)) form a globular 1 region. A Phosphoserine modification is found at Arg21. Val26 carries the phosphotyrosine modification. 2 disordered regions span residues 113-161 (RSPH…TPVV) and 167-186 (GTLA…RDRV). Basic and acidic residues predominate over residues 137 to 154 (DPAREERQVYRRKEREEG). The segment at 181–411 (DERDRVQKKT…YVSSLYDAMP (231 aa)) is actin-binding. Calponin-homology (CH) domains follow at residues 185-293 (RVQK…LHFQ) and 306-411 (MTAK…DAMP). One copy of the Spectrin 1 repeat lies at 653–727 (LQSTQRRPEL…ERARNDESQL (75 aa)). Ser728 is modified (phosphoserine). Spectrin repeat units lie at residues 748-832 (KLLN…REDH) and 845-938 (LQTQ…AIVQ). Thr823 bears the Phosphothreonine mark. Residues 949-1006 (RGHVPLIAVCDYKQVEVTVHKGDQCQLVGPAQPSHWKVLSGSSSEAAVPSVCFLVPPP) form the SH3 domain. The tract at residues 963–4572 (VEVTVHKGDQ…ARTAQKLRDV (3610 aa)) is required for interaction with intermediate filament proteins. At Ser1055 the chain carries Phosphoserine. Residues 1323-1423 (RERVTQLLER…QKFAKQYINA (101 aa)) form a Spectrin 4 repeat. Ser1443 carries the phosphoserine modification. Coiled-coil stretches lie at residues 1477–1697 (QYIK…ERRL) and 1729–2764 (SFAE…TTQA). Residues 1479–2762 (IKFISETLRR…ALAHSEIATT (1284 aa)) form a central fibrous rod domain region. The interval 1626–1653 (RAEEAEAQKRQAQEEAERLRRQVQDESQ) is disordered. Ser1729 carries the post-translational modification Phosphoserine. Lys1733 bears the N6-acetyllysine mark. Disordered regions lie at residues 1801–1835 (SLAQ…RELA), 2100–2141 (AEDT…SLAA), and 2223–2317 (RLRS…KHKK). 4 stretches are compositionally biased toward basic and acidic residues: residues 1806–1835 (DAEK…RELA), 2100–2116 (AEDT…EAAR), 2124–2136 (EEQR…ERVQ), and 2223–2266 (RLRS…KQSA). The segment covering 2267–2280 (EEQAQAQAQAQAAA) has biased composition (low complexity). The span at 2281–2296 (EKLRKEAEQEAARRAQ) shows a compositional bias: basic and acidic residues. Ser2639 carries the phosphoserine modification. The residue at position 2644 (Lys2644) is an N6-acetyllysine. Residues 2675–2728 (LREEQQRQQQQMEQEKQELMASMEEARRRQREAEEGVRRKQEELQHLEQQRQQQ) form a disordered region. A compositionally biased stretch (basic and acidic residues) spans 2687 to 2728 (EQEKQELMASMEEARRRQREAEEGVRRKQEELQHLEQQRQQQ). Residues 2763 to 4691 (QAASTKALPN…SLGGPESAVA (1929 aa)) form a globular 2 region. Position 2781 is a phosphoserine (Ser2781). A Phosphotyrosine modification is found at Tyr2788. Plectin repeat units lie at residues 2795–2832 (QKVP…REDV), 2833–2870 (YRYL…PGTA), 2871–2908 (LILL…PELH), 2909–2946 (HKLL…RDHG), 2947–2984 (VRLL…EEMN), and 2988–3022 (SDPS…PETG). At Ser2809 the chain carries Phosphoserine. Residue Thr2893 is modified to Phosphothreonine. Phosphotyrosine is present on Tyr3040. Lys3060 and Lys3098 each carry N6-acetyllysine. 6 Plectin repeats span residues 3123-3160 (ALVP…ADSV), 3161-3198 (RQAL…PEVA), 3199-3236 (VALL…PELH), 3237-3274 (EKLL…REQG), 3275-3312 (LRLL…KETN), and 3315-3350 (LTSP…QLTG). The span at 3312-3326 (NRALTSPRDDARVYH) shows a compositional bias: basic and acidic residues. The tract at residues 3312–3338 (NRALTSPRDDARVYHDPSTQEPVTYSQ) is disordered. A compositionally biased stretch (polar residues) spans 3328–3338 (PSTQEPVTYSQ). A Phosphotyrosine modification is found at Tyr3369. Lys3427 bears the N6-acetyllysine mark. Plectin repeat units follow at residues 3492-3529 (RTLL…PSTA), 3530-3567 (TLLL…PELH), 3568-3605 (EKLL…RDHA), 3606-3643 (IRLL…EEMN), and 3647-3681 (ADPS…PETG). Phosphothreonine is present on Thr3792. Tyr3797 carries the post-translational modification Phosphotyrosine. Plectin repeat units follow at residues 3827–3864 (WRYL…AEVA), 3865–3902 (RLLL…PELH), 3903–3940 (DRLL…AEEA), 3941–3978 (LRLL…KDTH), and 3982–4015 (SEPS…DPSG). The interval 3954 to 4291 (VDPRLGFHLP…KRRVVIVDPE (338 aa)) is required for interaction with type2 keratins, DES and VIM. A Phosphothreonine modification is found at Thr4037. Ser4061 is modified (phosphoserine). Plectin repeat units follow at residues 4070–4107 (QKFL…PGTA), 4108–4145 (FELL…PEFK), 4146–4183 (DKLL…KDHG), 4184–4221 (IRLL…EEMN), 4225–4259 (TDPS…PQTG), and 4272–4312 (RKTS…HQTY). The interval 4257–4307 (QTGLCLLPLKEKKRERKTSSKSSVRKRRVVIVDPETGKEMSVYEAYRKGLI) is binding to intermediate filaments. The disordered stretch occupies residues 4387–4420 (FRSRSSSVGSSSSYPISSAGPRTQLASWSDPTEE). A phosphoserine mark is found at Ser4389, Ser4391, Ser4392, Ser4393, Ser4396, Ser4397, Ser4398, and Ser4399. Positions 4389–4404 (SRSSSVGSSSSYPISS) are enriched in low complexity. Position 4400 is a phosphotyrosine (Tyr4400). Phosphoserine occurs at positions 4403 and 4413. Residues 4406–4416 (GPRTQLASWSD) are compositionally biased toward polar residues. Plectin repeat units lie at residues 4415–4452 (SDPT…NITG), 4453–4490 (QRLL…KIMV), 4491–4528 (DRIN…YEAG), 4529–4566 (QRFL…ARTA), and 4567–4604 (QKLR…EGTG). Thr4418 is subject to Phosphothreonine. Positions 4503-4572 (FEDPRTKTKM…ARTAQKLRDV (70 aa)) are required for efficient interaction with KRT5 and KRT14 heterodimers. At Thr4546 the chain carries Phosphothreonine; by CDK1. Phosphoserine is present on residues Ser4614 and Ser4620. Positions 4618–4678 (YYSPYSVSGS…SGYGRRYASG (61 aa)) are enriched in low complexity. Positions 4618–4691 (YYSPYSVSGS…SLGGPESAVA (74 aa)) are disordered. Position 4622 is a phosphotyrosine (Tyr4622). 3 positions are modified to phosphoserine: Ser4623, Ser4625, and Ser4629. Thr4630 bears the Phosphothreonine mark. Residues 4632 to 4647 (GSRTGSRTGSRAGSRR) are 4 X 4 AA tandem repeats of G-S-R-X. A Phosphoserine modification is found at Ser4633. An omega-N-methylarginine mark is found at Arg4634 and Arg4647. A phosphoserine mark is found at Ser4649 and Ser4682.

This sequence belongs to the plakin or cytolinker family. Homodimer or homotetramer. Interacts (via actin-binding domain) with SYNE3. Interacts (via calponin-homology (CH) 1 domain) with VIM (via rod region). Interacts (via N-terminus) with DST isoform 2 (via N-terminus). Interacts with FER. Interacts with TOR1A. Interacts with ANK3. Identified in complexes that contain VIM, EZR, AHNAK, BFSP1, BFSP2, ANK2, PLEC, PRX and spectrin. As to quaternary structure, interacts with KRT14, heterodimers consisting of KRT8 and KRT18, heterodimers consisting of KRT5 and KRT14, heterodimers consisting of KRT14 and KRT15, and heterodimers consisting of KRT1 and KRT10. Interacts with DES and VIM. Phosphorylated by CDK1; regulates dissociation from intermediate filaments during mitosis. Isoform PLEC-1A is phosphorylated on Ser-21. Isoform PLEC-1A is phosphorylated on Tyr-26. In terms of tissue distribution, detected in eye lens fiber cells (at protein level). Expressed at high levels in lung, brain, small intestine, muscle, heart and skin with lower levels found in kidney, liver, uterus, spleen and salivary gland.

The protein localises to the cytoplasm. It is found in the cytoskeleton. Its subcellular location is the cell junction. It localises to the hemidesmosome. The protein resides in the cell projection. The protein localises to the podosome. In terms of biological role, interlinks intermediate filaments with microtubules and microfilaments and anchors intermediate filaments to desmosomes or hemidesmosomes. May be involved not only in the cross-linking and stabilization of cytoskeletal intermediate filaments network, but also in the regulation of their dynamics. The polypeptide is Plectin (Plec) (Mus musculus (Mouse)).